Consider the following 256-residue polypeptide: Deoxyribose-phosphate aldolase (256 aa).

Aspartate 102 functions as the Proton donor/acceptor in the catalytic mechanism. The active-site Schiff-base intermediate with acetaldehyde is lysine 165. The active-site Proton donor/acceptor is lysine 197.

Belongs to the DeoC/FbaB aldolase family. DeoC type 2 subfamily.

It is found in the cytoplasm. It catalyses the reaction 2-deoxy-D-ribose 5-phosphate = D-glyceraldehyde 3-phosphate + acetaldehyde. The protein operates within carbohydrate degradation; 2-deoxy-D-ribose 1-phosphate degradation; D-glyceraldehyde 3-phosphate and acetaldehyde from 2-deoxy-alpha-D-ribose 1-phosphate: step 2/2. Functionally, catalyzes a reversible aldol reaction between acetaldehyde and D-glyceraldehyde 3-phosphate to generate 2-deoxy-D-ribose 5-phosphate. This chain is Deoxyribose-phosphate aldolase, found in Shewanella baltica (strain OS223).